The primary structure comprises 338 residues: RNA 3'-terminal phosphate cyclase (338 aa).

Residues Gln-103 and 283–287 contribute to the ATP site; that span reads YLADQ. His-308 functions as the Tele-AMP-histidine intermediate in the catalytic mechanism.

This sequence belongs to the RNA 3'-terminal cyclase family. Type 1 subfamily.

The protein resides in the cytoplasm. It carries out the reaction a 3'-end 3'-phospho-ribonucleotide-RNA + ATP = a 3'-end 2',3'-cyclophospho-ribonucleotide-RNA + AMP + diphosphate. Its function is as follows. Catalyzes the conversion of 3'-phosphate to a 2',3'-cyclic phosphodiester at the end of RNA. The mechanism of action of the enzyme occurs in 3 steps: (A) adenylation of the enzyme by ATP; (B) transfer of adenylate to an RNA-N3'P to produce RNA-N3'PP5'A; (C) and attack of the adjacent 2'-hydroxyl on the 3'-phosphorus in the diester linkage to produce the cyclic end product. The biological role of this enzyme is unknown but it is likely to function in some aspects of cellular RNA processing. In Escherichia coli O7:K1 (strain IAI39 / ExPEC), this protein is RNA 3'-terminal phosphate cyclase.